The chain runs to 345 residues: Phosphoribosylformylglycinamidine cyclo-ligase (345 aa).

This sequence belongs to the AIR synthase family.

The protein localises to the cytoplasm. The catalysed reaction is 2-formamido-N(1)-(5-O-phospho-beta-D-ribosyl)acetamidine + ATP = 5-amino-1-(5-phospho-beta-D-ribosyl)imidazole + ADP + phosphate + H(+). It functions in the pathway purine metabolism; IMP biosynthesis via de novo pathway; 5-amino-1-(5-phospho-D-ribosyl)imidazole from N(2)-formyl-N(1)-(5-phospho-D-ribosyl)glycinamide: step 2/2. The sequence is that of Phosphoribosylformylglycinamidine cyclo-ligase from Shewanella sp. (strain MR-7).